A 645-amino-acid chain; its full sequence is Acetyl-coenzyme A synthetase (645 aa).

CoA-binding positions include 190–193 and T308; that span reads RGGK. ATP contacts are provided by residues 384 to 386, 408 to 413, D497, and R512; these read GEP and DTWWQT. S520 is a CoA binding site. R523 contributes to the ATP binding site. V534, H536, and I539 together coordinate Mg(2+). Position 606 is an N6-acetyllysine (K606).

It belongs to the ATP-dependent AMP-binding enzyme family. Mg(2+) serves as cofactor. Post-translationally, acetylated. Deacetylation by the SIR2-homolog deacetylase activates the enzyme.

It catalyses the reaction acetate + ATP + CoA = acetyl-CoA + AMP + diphosphate. Catalyzes the conversion of acetate into acetyl-CoA (AcCoA), an essential intermediate at the junction of anabolic and catabolic pathways. AcsA undergoes a two-step reaction. In the first half reaction, AcsA combines acetate with ATP to form acetyl-adenylate (AcAMP) intermediate. In the second half reaction, it can then transfer the acetyl group from AcAMP to the sulfhydryl group of CoA, forming the product AcCoA. This chain is Acetyl-coenzyme A synthetase, found in Alcanivorax borkumensis (strain ATCC 700651 / DSM 11573 / NCIMB 13689 / SK2).